The sequence spans 274 residues: Protein RecA (274 aa).

Residue 43–50 participates in ATP binding; that stretch reads GPESSGKT.

The protein belongs to the RecA family.

The protein localises to the cytoplasm. Can catalyze the hydrolysis of ATP in the presence of single-stranded DNA, the ATP-dependent uptake of single-stranded DNA by duplex DNA, and the ATP-dependent hybridization of homologous single-stranded DNAs. It interacts with LexA causing its activation and leading to its autocatalytic cleavage. The chain is Protein RecA from Neisseria pharyngis.